The chain runs to 160 residues: Oligoribonuclease (160 aa).

The region spanning 8–158 (LIWIDLEMTG…YNKLKKKTLI (151 aa)) is the Exonuclease domain. Residue Tyr129 is part of the active site.

Belongs to the oligoribonuclease family.

It localises to the cytoplasm. Functionally, 3'-to-5' exoribonuclease specific for small oligoribonucleotides. The polypeptide is Oligoribonuclease (orn) (Buchnera aphidicola subsp. Baizongia pistaciae (strain Bp)).